We begin with the raw amino-acid sequence, 502 residues long: MMEINSEATVTLVSVVTLPILLALLTRKSSSKKRRPPGPWNLPLVGGLLHLLRSQPQVALRDLAGKYGPVMFLRTGQVDTVVISSPAAAQEVLRDKDVTFASRPSLLVSEIFCYGNLDIGFAPYGAYWRMLRKLCTVELLSTKMVRQLAPIRDGETLALVRNIEAAAGGKKPFTLATLLISCTNTFTAKAAFGQACGGELQEQFLTALDEALKFSNGFCFGDLFPSLRFIDAMTGLRSRLERLRLQLDTVFDKIVAQCESNPGDSLVNVLLRIKDQGELDFPFSSTHVKAIILDMFTGGTETTSSTTEWLMSELMRNPEVMAKVQAEVRGVFDNKSPQDHEGLLENLSYMKLVIKETLRLNPVLPLLLPHLCRETCEIGGYEIVEGTRVLINSWAMARSPEYWDDAEKFIPERFEDGTADFKGSRFEYLPFGTGRRRCPGDIFAMATLELIVARLLYYFDWSLPDGMQPGDIDMELVVGATARRKNHLQLVASPYKPISMQS.

2 helical membrane passes run 4–26 (INSE…ALLT) and 106–128 (LLVS…GAYW). Cysteine 438 provides a ligand contact to heme.

The protein belongs to the cytochrome P450 family. Heme serves as cofactor.

The protein resides in the membrane. It catalyses the reaction 9beta-pimara-7,15-diene + 3 reduced [NADPH--hemoprotein reductase] + 3 O2 = 9beta-pimara-7,15-dien-19-oate + 3 oxidized [NADPH--hemoprotein reductase] + 4 H2O + 4 H(+). Involved in momilactone phytoalexins biosynthesis; acts as a multifunctional diterpene oxidase. Participates in the biosynthetic steps between 9-beta-pimara-7,15-diene and 3-beta-hydroxy-9-beta-pimara-7,15-dien-19,6-beta-olide. Also catalyzes consecutive oxidations at C19 of syn-stemod-13(17)-ene. In Oryza sativa subsp. japonica (Rice), this protein is 9-beta-pimara-7,15-diene oxidase (CYP99A3).